The following is a 188-amino-acid chain: uncharacterized protein (188 aa).

The next 3 helical transmembrane spans lie at 6-26 (MIVFMLLMVEIVSFVILSLPL), 43-63 (FAGRVKHVLKITIICILILFA), and 110-130 (ALFLSLVVNRYYLALEAMIAA).

It localises to the membrane. This is an uncharacterized protein from Schizosaccharomyces pombe (strain 972 / ATCC 24843) (Fission yeast).